We begin with the raw amino-acid sequence, 512 residues long: Na(+)/H(+) antiporter NhaB (512 aa).

Transmembrane regions (helical) follow at residues 28–48 (FLII…WLLV), 52–72 (IFTL…LLAI), 97–117 (LLLM…LFIF), 144–164 (FLDA…FYGI), 201–221 (LMMH…VGEP), 237–257 (FFLR…LTCF), 296–330 (LALI…IILA), 347–367 (TEAL…AVII), 390–410 (LFYL…VGSV), 446–466 (ATPN…APLI), and 474–494 (VWMA…CVKF).

It belongs to the NhaB Na(+)/H(+) (TC 2.A.34) antiporter family.

The protein resides in the cell inner membrane. The enzyme catalyses 2 Na(+)(in) + 3 H(+)(out) = 2 Na(+)(out) + 3 H(+)(in). Functionally, na(+)/H(+) antiporter that extrudes sodium in exchange for external protons. This chain is Na(+)/H(+) antiporter NhaB, found in Enterobacter sp. (strain 638).